Here is a 2070-residue protein sequence, read N- to C-terminus: HEAT repeat-containing protein 5B (2070 aa).

HEAT repeat units follow at residues 848-885 (EVRK…VVGE), 1062-1099 (VNLS…REAA), and 1290-1327 (LHLS…KFAS). S1737 carries the phosphoserine modification.

The protein belongs to the HEATR5 family. Self-associates. Component of the aftiphilin/p200/gamma-synergin complex, at least composed of AFTPH/aftiphilin, HEATR5B/p200a and SYNRG/gamma-synergin, which plays a role in the AP1G1/AP-1-mediated protein trafficking from early to recycling endosomes and between the trans-Golgi network (TGN) and endosomes. Within the complex interacts with AFTPH/aftiphilin and SYNRG/gamma-synergin; the interactions are direct. Interacts with GGA1.

It is found in the cytoplasm. The protein resides in the perinuclear region. The protein localises to the cytoplasmic vesicle. Its subcellular location is the clathrin-coated vesicle. Functionally, component of clathrin-coated vesicles. Component of the aftiphilin/p200/gamma-synergin complex, which plays roles in AP1G1/AP-1-mediated protein trafficking including the trafficking of transferrin from early to recycling endosomes, and the membrane trafficking of furin and the lysosomal enzyme cathepsin D between the trans-Golgi network (TGN) and endosomes. The sequence is that of HEAT repeat-containing protein 5B (Heatr5b) from Mus musculus (Mouse).